The sequence spans 286 residues: Ribosome-inactivating protein beta-momorcharin (286 aa).

The signal sequence occupies residues 1-23; the sequence is MVKCLLLSFLIIAIFIGVPTAKG. N74 carries an N-linked (GlcNAc...) asparagine glycan. Catalysis depends on residues Y93, Y132, E181, and R184.

This sequence belongs to the ribosome-inactivating protein family. Type 1 RIP subfamily. In terms of processing, bound to a branched hexasaccharide.

It carries out the reaction Endohydrolysis of the N-glycosidic bond at one specific adenosine on the 28S rRNA.. Functionally, irreversibly relaxes supercoiled DNA and catalyzes double-stranded breakage. Also acts as a ribosome inactivating protein. The chain is Ribosome-inactivating protein beta-momorcharin (MAP30) from Momordica charantia (Bitter gourd).